A 565-amino-acid chain; its full sequence is Anaphase-promoting complex subunit 7 (565 aa).

10 TPR repeats span residues 101 to 134, 169 to 202, 203 to 236, 237 to 270, 339 to 372, 373 to 406, 407 to 441, 442 to 474, 475 to 508, and 509 to 531; these read EIEV…RQRT, LDAI…LDWL, SVWI…LRDN, VDLL…DPYL, VQAL…APCR, LDCY…LGAN, AQTL…RPDY, IKAV…NQSD, CVLH…DPND, and QKSL…TQEE. Residue K229 is modified to N6-acetyllysine. A compositionally biased stretch (basic and acidic residues) spans 513-523; sequence EGMQKMEKEES. Residues 513–565 are disordered; that stretch reads EGMQKMEKEESPTDATQEEDVDDMEGSGEEGDLEGSDSEAAQWADQEQWFGMQ. The segment covering 528–549 has biased composition (acidic residues); that stretch reads TQEEDVDDMEGSGEEGDLEGSD.

Belongs to the APC7 family. In terms of assembly, V-shaped homodimer. The mammalian APC/C is composed at least of 14 distinct subunits ANAPC1, ANAPC2, CDC27/APC3, ANAPC4, ANAPC5, CDC16/APC6, ANAPC7, CDC23/APC8, ANAPC10, ANAPC11, CDC26/APC12, ANAPC13, ANAPC15 and ANAPC16 that assemble into a complex of at least 19 chains with a combined molecular mass of around 1.2 MDa; APC/C interacts with FZR1 and FBXO5.

The protein resides in the cytoplasm. It localises to the cytoskeleton. The protein localises to the nucleus. Its subcellular location is the spindle. Its pathway is protein modification; protein ubiquitination. Its function is as follows. Component of the anaphase promoting complex/cyclosome (APC/C), a cell cycle-regulated E3 ubiquitin ligase that controls progression through mitosis and the G1 phase of the cell cycle. The APC/C complex acts by mediating ubiquitination and subsequent degradation of target proteins: it mainly mediates the formation of 'Lys-11'-linked polyubiquitin chains and, to a lower extent, the formation of 'Lys-48'- and 'Lys-63'-linked polyubiquitin chains. The APC/C complex catalyzes assembly of branched 'Lys-11'-/'Lys-48'-linked branched ubiquitin chains on target proteins. APC7 is not required for the assembly of the APC/C complex, but has an enzyme-substrate adapter activity mediating the processive ubiquitination of specific substrates. Involved in brain development through the specific ubiquitination and clearance of MKI67 from constitutive heterochromatin after neuronal progenitors exit mitosis. This chain is Anaphase-promoting complex subunit 7, found in Homo sapiens (Human).